A 98-amino-acid chain; its full sequence is Small ribosomal subunit protein uS17 (98 aa).

The disordered stretch occupies residues 1–21; that stretch reads MADQKGPKYTPAAEKPRGRRK. An Isoglutamyl lysine isopeptide (Lys-Gln) (interchain with Q-Cter in protein Pup) cross-link involves residue Lys96.

It belongs to the universal ribosomal protein uS17 family. As to quaternary structure, part of the 30S ribosomal subunit.

Its function is as follows. One of the primary rRNA binding proteins, it binds specifically to the 5'-end of 16S ribosomal RNA. In Mycolicibacterium smegmatis (strain ATCC 700084 / mc(2)155) (Mycobacterium smegmatis), this protein is Small ribosomal subunit protein uS17 (rpsQ).